The primary structure comprises 476 residues: UDP-N-acetylmuramate--L-alanine ligase (476 aa).

Residue 125–131 (GTHGKTT) coordinates ATP.

It belongs to the MurCDEF family.

It localises to the cytoplasm. The enzyme catalyses UDP-N-acetyl-alpha-D-muramate + L-alanine + ATP = UDP-N-acetyl-alpha-D-muramoyl-L-alanine + ADP + phosphate + H(+). It functions in the pathway cell wall biogenesis; peptidoglycan biosynthesis. Functionally, cell wall formation. This Histophilus somni (strain 129Pt) (Haemophilus somnus) protein is UDP-N-acetylmuramate--L-alanine ligase.